A 130-amino-acid chain; its full sequence is Ion transport peptide (130 aa).

Disulfide bonds link C62–C98, C78–C94, and C81–C107. At L127 the chain carries Leucine amide.

Belongs to the arthropod CHH/MIH/GIH/VIH hormone family. Brain and corpus cardiacum.

The protein resides in the secreted. Functionally, stimulates salt and water reabsorption and inhibits acid secretion in the ileum of S.gregaria. The protein is Ion transport peptide of Schistocerca gregaria (Desert locust).